The primary structure comprises 420 residues: Methylaspartate ammonia-lyase 1 (420 aa).

Q173 lines the (2S,3S)-3-methyl-L-aspartate pocket. Residues D237, E272, and D306 each coordinate Mg(2+). (2S,3S)-3-methyl-L-aspartate is bound at residue Q328. The active-site Proton acceptor is the K330. 359–360 (SC) is a (2S,3S)-3-methyl-L-aspartate binding site.

As to quaternary structure, homodimer. Requires Mg(2+) as cofactor.

It catalyses the reaction (2S,3S)-3-methyl-L-aspartate = mesaconate + NH4(+). It participates in amino-acid degradation; L-glutamate degradation via mesaconate pathway; acetate and pyruvate from L-glutamate: step 2/4. Functionally, involved in the methylaspartate cycle. Catalyzes the formation of the alpha,beta-unsaturated bond by the reversible anti elimination of ammonia from L-threo-beta-methylaspartate (L-threo-(2S,3S)-3-methylaspartate) to give mesaconate. It can also catalyze the amination of fumarate and ethylfumarate, and the deamination of hydroxylamine, hydrazine, methylamine and ethylamine. The sequence is that of Methylaspartate ammonia-lyase 1 from Carboxydothermus hydrogenoformans (strain ATCC BAA-161 / DSM 6008 / Z-2901).